The following is a 476-amino-acid chain: Glutamyl-tRNA(Gln) amidotransferase subunit A (476 aa).

Catalysis depends on charge relay system residues lysine 76 and serine 151. The active-site Acyl-ester intermediate is serine 175.

This sequence belongs to the amidase family. GatA subfamily. As to quaternary structure, heterotrimer of A, B and C subunits.

The enzyme catalyses L-glutamyl-tRNA(Gln) + L-glutamine + ATP + H2O = L-glutaminyl-tRNA(Gln) + L-glutamate + ADP + phosphate + H(+). Allows the formation of correctly charged Gln-tRNA(Gln) through the transamidation of misacylated Glu-tRNA(Gln) in organisms which lack glutaminyl-tRNA synthetase. The reaction takes place in the presence of glutamine and ATP through an activated gamma-phospho-Glu-tRNA(Gln). The sequence is that of Glutamyl-tRNA(Gln) amidotransferase subunit A from Chlorobium phaeobacteroides (strain DSM 266 / SMG 266 / 2430).